Here is a 796-residue protein sequence, read N- to C-terminus: Putative aconitate hydratase, mitochondrial (796 aa).

Residues 1–28 constitute a mitochondrion transit peptide; sequence MLRQIVSQRSAARRQLIDQLAPCLRRGL. Substrate contacts are provided by residues Q108 and 201-203; that span reads DSH. 3 residues coordinate [4Fe-4S] cluster: C399, C462, and C465. 2 residues coordinate substrate: R489 and R494. Positions 540 to 569 are disordered; it reads EPPTGQDLPSKGFEAGNPAFQPSAPVPDSS. 685–686 contacts substrate; sequence AR.

The protein belongs to the aconitase/IPM isomerase family.

It localises to the mitochondrion. Has no detectable activity towards cis-acontiate or cis-homoaconitate. This Emericella nidulans (strain FGSC A4 / ATCC 38163 / CBS 112.46 / NRRL 194 / M139) (Aspergillus nidulans) protein is Putative aconitate hydratase, mitochondrial (acoB).